A 164-amino-acid polypeptide reads, in one-letter code: Putative 4-hydroxy-4-methyl-2-oxoglutarate aldolase (164 aa).

Residues 79–82 and arginine 101 contribute to the substrate site; that span reads GDRL. Aspartate 102 lines the a divalent metal cation pocket.

It belongs to the class II aldolase/RraA-like family. In terms of assembly, homotrimer. The cofactor is a divalent metal cation.

It catalyses the reaction 4-hydroxy-4-methyl-2-oxoglutarate = 2 pyruvate. The catalysed reaction is oxaloacetate + H(+) = pyruvate + CO2. In terms of biological role, catalyzes the aldol cleavage of 4-hydroxy-4-methyl-2-oxoglutarate (HMG) into 2 molecules of pyruvate. Also contains a secondary oxaloacetate (OAA) decarboxylase activity due to the common pyruvate enolate transition state formed following C-C bond cleavage in the retro-aldol and decarboxylation reactions. The sequence is that of Putative 4-hydroxy-4-methyl-2-oxoglutarate aldolase from Halorhodospira halophila (strain DSM 244 / SL1) (Ectothiorhodospira halophila (strain DSM 244 / SL1)).